The chain runs to 136 residues: Protein Tat (136 aa).

The segment at 22–37 (CTNCYCKKCCFHCPVC) is cysteine-rich. The segment at 38 to 48 (FTKKALGISYG) is core. A compositionally biased stretch (basic residues) spans 48–57 (GRKRRGRKSA). The interval 48-136 (GRKRRGRKSA…SGSSGSACKH (89 aa)) is disordered. A Nuclear localization signal, and RNA-binding (TAR) motif is present at residues 49–55 (RKRRGRK). Residues 58–73 (VHSTNNQDPVRQQSLP) show a composition bias toward polar residues. Positions 104-120 (SSVSSGRTSGTSSSGYT) are enriched in low complexity. Polar residues predominate over residues 123-136 (FKTSSGSSGSACKH).

Belongs to the lentiviruses Tat family. In terms of assembly, interacts with host CCNT1. Associates with the P-TEFb complex composed at least of Tat, P-TEFb (CDK9 and CCNT1), TAR RNA, RNA Pol II. Interacts with CCNT2; the resulting complex is unable to bind to TAR RNA.

Its subcellular location is the host nucleus. It is found in the host nucleolus. In terms of biological role, transcriptional activator that increases RNA Pol II processivity, thereby increasing the level of full-length viral transcripts. Recognizes a hairpin structure at the 5'-LTR of the nascent viral mRNAs referred to as the transactivation responsive RNA element (TAR) and recruits the cyclin T1-CDK9 complex (P-TEFb complex) that will in turn hyperphosphorylate the RNA polymerase II to allow efficient elongation. The CDK9 component of P-TEFb and other Tat-activated kinases hyperphosphorylate the C-terminus of RNA Pol II that becomes stabilized and much more processive. Extracellular circulating Tat can be endocytosed by surrounding uninfected cells via the binding to several surface receptors. Endosomal low pH allows Tat to cross the endosome membrane to enter the cytosol and eventually further translocate into the nucleus, thereby inducing severe cell dysfunctions ranging from cell activation to cell death. Through. In Simian immunodeficiency virus (isolate TAN1) (SIV-cpz), this protein is Protein Tat.